Reading from the N-terminus, the 464-residue chain is Pup--protein ligase (464 aa).

Glu14 contributes to the Mg(2+) binding site. Residue Arg58 coordinates ATP. Tyr60 provides a ligand contact to Mg(2+). Asp62 (proton acceptor) is an active-site residue. A Mg(2+)-binding site is contributed by Glu68. Residues Thr71 and Trp430 each coordinate ATP.

The protein belongs to the Pup ligase/Pup deamidase family. Pup-conjugating enzyme subfamily.

It carries out the reaction ATP + [prokaryotic ubiquitin-like protein]-L-glutamate + [protein]-L-lysine = ADP + phosphate + N(6)-([prokaryotic ubiquitin-like protein]-gamma-L-glutamyl)-[protein]-L-lysine.. It functions in the pathway protein degradation; proteasomal Pup-dependent pathway. The protein operates within protein modification; protein pupylation. Functionally, catalyzes the covalent attachment of the prokaryotic ubiquitin-like protein modifier Pup to the proteasomal substrate proteins, thereby targeting them for proteasomal degradation. This tagging system is termed pupylation. The ligation reaction involves the side-chain carboxylate of the C-terminal glutamate of Pup and the side-chain amino group of a substrate lysine. The protein is Pup--protein ligase of Micrococcus luteus (strain ATCC 4698 / DSM 20030 / JCM 1464 / CCM 169 / CCUG 5858 / IAM 1056 / NBRC 3333 / NCIMB 9278 / NCTC 2665 / VKM Ac-2230) (Micrococcus lysodeikticus).